Here is a 72-residue protein sequence, read N- to C-terminus: Small ribosomal subunit protein bS18c (72 aa).

It belongs to the bacterial ribosomal protein bS18 family. As to quaternary structure, part of the 30S ribosomal subunit.

The protein localises to the plastid. The protein resides in the chloroplast. This chain is Small ribosomal subunit protein bS18c, found in Thalassiosira pseudonana (Marine diatom).